The following is a 251-amino-acid chain: Type III pantothenate kinase (251 aa).

An ATP-binding site is contributed by 6–13 (DCGNSFIK). Residues tyrosine 93 and 100-103 (GLDR) contribute to the substrate site. Catalysis depends on aspartate 102, which acts as the Proton acceptor. Residue aspartate 122 participates in K(+) binding. Threonine 125 contributes to the ATP binding site. Residue threonine 182 participates in substrate binding.

The protein belongs to the type III pantothenate kinase family. As to quaternary structure, homodimer. Requires NH4(+) as cofactor. It depends on K(+) as a cofactor.

The protein resides in the cytoplasm. The enzyme catalyses (R)-pantothenate + ATP = (R)-4'-phosphopantothenate + ADP + H(+). It functions in the pathway cofactor biosynthesis; coenzyme A biosynthesis; CoA from (R)-pantothenate: step 1/5. Functionally, catalyzes the phosphorylation of pantothenate (Pan), the first step in CoA biosynthesis. This is Type III pantothenate kinase from Azotobacter vinelandii (strain DJ / ATCC BAA-1303).